A 573-amino-acid chain; its full sequence is uncharacterized protein (573 aa).

This is an uncharacterized protein from Treponema pallidum (strain Nichols).